A 120-amino-acid polypeptide reads, in one-letter code: Large ribosomal subunit protein uL18 (120 aa).

This sequence belongs to the universal ribosomal protein uL18 family. As to quaternary structure, part of the 50S ribosomal subunit; part of the 5S rRNA/L5/L18/L25 subcomplex. Contacts the 5S and 23S rRNAs.

Its function is as follows. This is one of the proteins that bind and probably mediate the attachment of the 5S RNA into the large ribosomal subunit, where it forms part of the central protuberance. The polypeptide is Large ribosomal subunit protein uL18 (Geobacillus kaustophilus (strain HTA426)).